We begin with the raw amino-acid sequence, 141 residues long: MSDVESADNNVVVEEKAVFDNVTAIQKVIKNAHVHDGLKIGIREVIKSIESQEAKVCFLSDVCSEPAYKKLITTLCAEKNIPLFMVQNDSKDLGHWAGLFKLDNEGNARKIIGASSVAVVDFGEDSAEKDFLLSQNQTVTA.

The protein belongs to the eukaryotic ribosomal protein eS12 family. In terms of assembly, component of the small ribosomal subunit. Mature ribosomes consist of a small (40S) and a large (60S) subunit. The 40S subunit contains about 32 different proteins and 1 molecule of RNA (18S). The 60S subunit contains about 42 different proteins and 3 molecules of RNA (28S, 5.8S and 5S).

Its subcellular location is the cytoplasm. Its function is as follows. Component of the ribosome, a large ribonucleoprotein complex responsible for the synthesis of proteins in the cell. The small ribosomal subunit (SSU) binds messenger RNAs (mRNAs) and translates the encoded message by selecting cognate aminoacyl-transfer RNA (tRNA) molecules. The large subunit (LSU) contains the ribosomal catalytic site termed the peptidyl transferase center (PTC), which catalyzes the formation of peptide bonds, thereby polymerizing the amino acids delivered by tRNAs into a polypeptide chain. The nascent polypeptides leave the ribosome through a tunnel in the LSU and interact with protein factors that function in enzymatic processing, targeting, and the membrane insertion of nascent chains at the exit of the ribosomal tunnel. This is Small ribosomal subunit protein eS12 from Plasmodium falciparum (isolate 3D7).